Reading from the N-terminus, the 256-residue chain is ATP synthase peripheral stalk subunit b, mitochondrial (256 aa).

Residues 1–42 constitute a mitochondrion transit peptide; the sequence is MLSRVVLSAAAAAAPSLKNAALLGPGVLQATRIFHTGQPSLA. K131 is modified (N6-succinyllysine). 6 positions are modified to N6-acetyllysine: K139, K154, K162, K221, K233, and K244.

It belongs to the eukaryotic ATPase B chain family. Component of the ATP synthase complex composed at least of ATP5F1A/subunit alpha, ATP5F1B/subunit beta, ATP5MC1/subunit c (homooctomer), MT-ATP6/subunit a, MT-ATP8/subunit 8, ATP5ME/subunit e, ATP5MF/subunit f, ATP5MG/subunit g, ATP5MK/subunit k, ATP5MJ/subunit j, ATP5F1C/subunit gamma, ATP5F1D/subunit delta, ATP5F1E/subunit epsilon, ATP5PF/subunit F6, ATP5PB/subunit b, ATP5PD/subunit d, ATP5PO/subunit OSCP. ATP synthase complex consists of a soluble F(1) head domain (subunits alpha(3) and beta(3)) - the catalytic core - and a membrane F(0) domain - the membrane proton channel (subunits c, a, 8, e, f, g, k and j). These two domains are linked by a central stalk (subunits gamma, delta, and epsilon) rotating inside the F1 region and a stationary peripheral stalk (subunits F6, b, d, and OSCP).

Its subcellular location is the mitochondrion. The protein localises to the mitochondrion inner membrane. Functionally, subunit b, of the mitochondrial membrane ATP synthase complex (F(1)F(0) ATP synthase or Complex V) that produces ATP from ADP in the presence of a proton gradient across the membrane which is generated by electron transport complexes of the respiratory chain. ATP synthase complex consist of a soluble F(1) head domain - the catalytic core - and a membrane F(1) domain - the membrane proton channel. These two domains are linked by a central stalk rotating inside the F(1) region and a stationary peripheral stalk. During catalysis, ATP synthesis in the catalytic domain of F(1) is coupled via a rotary mechanism of the central stalk subunits to proton translocation. In vivo, can only synthesize ATP although its ATP hydrolase activity can be activated artificially in vitro. Part of the complex F(0) domain. Part of the complex F(0) domain and the peripheric stalk, which acts as a stator to hold the catalytic alpha(3)beta(3) subcomplex and subunit a/ATP6 static relative to the rotary elements. The chain is ATP synthase peripheral stalk subunit b, mitochondrial from Bos taurus (Bovine).